A 171-amino-acid chain; its full sequence is Putative rhomboid protein L523 (171 aa).

The next 4 helical transmembrane spans lie at 3–23 (YVTY…LNFF), 67–87 (FAFC…AEHT), 94–114 (VYTV…LMSL), and 119–139 (GLSI…SGIS). Ser100 acts as the Nucleophile in catalysis. His143 is an active-site residue. The helical transmembrane segment at 144–164 (ICGMIAGFVYVVLFPLPKGSV) threads the bilayer.

This sequence belongs to the peptidase S54 family.

The protein resides in the membrane. In terms of biological role, probable serine protease. In Acanthamoeba polyphaga mimivirus (APMV), this protein is Putative rhomboid protein L523.